The primary structure comprises 379 residues: Homoserine O-succinyltransferase (379 aa).

One can recognise an AB hydrolase-1 domain in the interval 51–360; sequence NAVLICHALS…DSPYGHDAFL (310 aa). The active-site Nucleophile is the S157. Residue R227 coordinates substrate. Residues D323 and H356 contribute to the active site. D357 contributes to the substrate binding site.

This sequence belongs to the AB hydrolase superfamily. MetX family. Homodimer.

The protein localises to the cytoplasm. The enzyme catalyses L-homoserine + succinyl-CoA = O-succinyl-L-homoserine + CoA. Its pathway is amino-acid biosynthesis; L-methionine biosynthesis via de novo pathway; O-succinyl-L-homoserine from L-homoserine: step 1/1. Its function is as follows. Transfers a succinyl group from succinyl-CoA to L-homoserine, forming succinyl-L-homoserine. This Pseudomonas putida (strain ATCC 700007 / DSM 6899 / JCM 31910 / BCRC 17059 / LMG 24140 / F1) protein is Homoserine O-succinyltransferase.